The following is a 274-amino-acid chain: MGLFEKYVSNLNRLLILTMVFAVICAGSTLALGVKKGIDLKGGTMVILKTEKDPDTVTSEASRILGVSDVEAIRSSQGDVIVQVPKYLSADDVNKLARAVGGEVESVQTIGPALGRVFWESVKVAVPLALVAVSIVVFAIFRKPLLSAAVLGALALDLVDALGLMALTGVPLTLASFAGLLMIIGYAVDSNILLSMYTVKRRRVRRVDRAIADSFKTGITMVATTTAAACALFLLSMSEAMFEIAAVVIFGLIADVLNTWIFNAWVIREKIAGR.

A run of 6 helical transmembrane segments spans residues 14–34 (LLIL…ALGV), 121–141 (SVKV…FAIF), 143–163 (KPLL…DALG), 175–197 (ASFA…LSMY), 217–237 (TGIT…LLSM), and 247–267 (VVIF…AWVI).

This sequence belongs to the SecD/SecF family. SecF subfamily. Part of the protein translocation apparatus. Forms a complex with SecD.

The protein localises to the cell membrane. In terms of biological role, involved in protein export. The protein is Protein-export membrane protein SecF of Methanopyrus kandleri (strain AV19 / DSM 6324 / JCM 9639 / NBRC 100938).